Consider the following 145-residue polypeptide: D-aminoacyl-tRNA deacylase (145 aa).

The Gly-cisPro motif, important for rejection of L-amino acids signature appears at 137–138 (GP).

This sequence belongs to the DTD family. As to quaternary structure, homodimer.

The protein localises to the cytoplasm. It carries out the reaction glycyl-tRNA(Ala) + H2O = tRNA(Ala) + glycine + H(+). It catalyses the reaction a D-aminoacyl-tRNA + H2O = a tRNA + a D-alpha-amino acid + H(+). An aminoacyl-tRNA editing enzyme that deacylates mischarged D-aminoacyl-tRNAs. Also deacylates mischarged glycyl-tRNA(Ala), protecting cells against glycine mischarging by AlaRS. Acts via tRNA-based rather than protein-based catalysis; rejects L-amino acids rather than detecting D-amino acids in the active site. By recycling D-aminoacyl-tRNA to D-amino acids and free tRNA molecules, this enzyme counteracts the toxicity associated with the formation of D-aminoacyl-tRNA entities in vivo and helps enforce protein L-homochirality. The sequence is that of D-aminoacyl-tRNA deacylase from Shewanella sediminis (strain HAW-EB3).